A 405-amino-acid polypeptide reads, in one-letter code: Argininosuccinate synthase (405 aa).

Residues 10-18 (AYSGGLDTS) and Ala37 contribute to the ATP site. L-citrulline contacts are provided by Tyr88 and Ser93. Position 118 (Gly118) interacts with ATP. Thr120, Asn124, and Asp125 together coordinate L-aspartate. Asn124 contributes to the L-citrulline binding site. 5 residues coordinate L-citrulline: Arg128, Ser179, Ser188, Glu264, and Tyr276.

The protein belongs to the argininosuccinate synthase family. Type 1 subfamily. Homotetramer.

It is found in the cytoplasm. The catalysed reaction is L-citrulline + L-aspartate + ATP = 2-(N(omega)-L-arginino)succinate + AMP + diphosphate + H(+). Its pathway is amino-acid biosynthesis; L-arginine biosynthesis; L-arginine from L-ornithine and carbamoyl phosphate: step 2/3. This Pseudomonas syringae pv. tomato (strain ATCC BAA-871 / DC3000) protein is Argininosuccinate synthase.